The following is a 131-amino-acid chain: Phosphoribosyl-AMP cyclohydrolase (131 aa).

D78 lines the Mg(2+) pocket. Position 79 (C79) interacts with Zn(2+). 2 residues coordinate Mg(2+): D80 and D82. Residues C96 and C103 each coordinate Zn(2+).

The protein belongs to the PRA-CH family. As to quaternary structure, homodimer. Requires Mg(2+) as cofactor. It depends on Zn(2+) as a cofactor.

Its subcellular location is the cytoplasm. It carries out the reaction 1-(5-phospho-beta-D-ribosyl)-5'-AMP + H2O = 1-(5-phospho-beta-D-ribosyl)-5-[(5-phospho-beta-D-ribosylamino)methylideneamino]imidazole-4-carboxamide. Its pathway is amino-acid biosynthesis; L-histidine biosynthesis; L-histidine from 5-phospho-alpha-D-ribose 1-diphosphate: step 3/9. Functionally, catalyzes the hydrolysis of the adenine ring of phosphoribosyl-AMP. The polypeptide is Phosphoribosyl-AMP cyclohydrolase (Neisseria gonorrhoeae (strain ATCC 700825 / FA 1090)).